We begin with the raw amino-acid sequence, 268 residues long: Undecaprenyl-diphosphatase (268 aa).

The next 7 membrane-spanning stretches (helical) occupy residues 7 to 27 (IFNAIILGIVEGITEFFPISS), 87 to 107 (LIYHHIILGNIPIIFIGLCIY), 116 to 136 (FYSIIYALIFGTILLILTEIS), 146 to 166 (IETPQILIIGIFQCLALWPGF), 187 to 207 (VEFSFILSVPIFFGASVLDVI), 210 to 230 (FYDISINNIPMLFSGFLSAFI), and 247 to 267 (SLIPFIIYRSILSIIIYLFFM).

This sequence belongs to the UppP family.

The protein resides in the cell membrane. The enzyme catalyses di-trans,octa-cis-undecaprenyl diphosphate + H2O = di-trans,octa-cis-undecaprenyl phosphate + phosphate + H(+). In terms of biological role, catalyzes the dephosphorylation of undecaprenyl diphosphate (UPP). Confers resistance to bacitracin. The sequence is that of Undecaprenyl-diphosphatase from Buchnera aphidicola subsp. Baizongia pistaciae (strain Bp).